A 713-amino-acid polypeptide reads, in one-letter code: MTANAINGPVLPTPLATPGDNNKSADTTMADQGTRPESQPQGQNNGAKPQNGQTKPMSAANAKDPLRPRRKKAKRACFACQRAHLTCGDERPCQRCIKRGIQNACHDGVRKKAKYLHDAPNEALMPHLQGHLYTTQANTARNTIPLTRNGSNSKTNFYPQQQSSFNNFYQNKPDPTLNQPQLHDTGRPDTFPSQSPVSPTFNMTANPAASGNQGLPSSLSASNSNASGQAQNGFGSAFFDPSDPALFNFDLASMNFGNHYGALEFGMLGHMATGAGETPPSDGATQHGSVGRSGSGTYTAGSNFGESPTGQPSFLFGDPTIGGDWTSSVNTRNIYGQNMNNMSETPHAFAIESAPANFASPNSIESPLLTNTTTFDDNTAPTYANRANINSVPSQRQPVVSTPQLKHLQVGKRRQRNPSAIYDSVKEPYSYTTGFHSLTAFIQRRFSPQNTLRIAKALASIRPSFIATTKTLNRDDLIFMEKCFQRTLWEYEDFINACGTPTIVCRRTGEIAAVGKEFSILTGWKKEVLLGKEPNLNINTGGSSGAMSGVTSRGSFTPRTGMDINPTGRTQPVFLAELLDDESVVEFYEDFAKLAFGDSRGSVMTTCKLLKYKTKADMDMLSGTTSSAGGENEHGAAGNGDVKPENGMGASNGQSQHSLQRQRKWSRGGIAGEAGMNQLGFKDGKVECSYCWTVKRDVFDIPMLIVMNFLPCI.

The segment at 1–70 (MTANAINGPV…NAKDPLRPRR (70 aa)) is disordered. Residues 19–56 (GDNNKSADTTMADQGTRPESQPQGQNNGAKPQNGQTKP) are compositionally biased toward polar residues. The zn(2)-C6 fungal-type DNA-binding region spans 77-105 (CFACQRAHLTCGDERPCQRCIKRGIQNAC). Residues 145 to 159 (PLTRNGSNSKTNFYP) are compositionally biased toward polar residues. Disordered stretches follow at residues 145-229 (PLTR…ASGQ), 274-318 (GAGE…LFGD), 541-564 (GGSS…GMDI), and 623-665 (GTTS…QRKW). Low complexity predominate over residues 160 to 171 (QQQSSFNNFYQN). Over residues 191 to 212 (FPSQSPVSPTFNMTANPAASGN) the composition is skewed to polar residues. Low complexity predominate over residues 213–229 (QGLPSSLSASNSNASGQ). 3 stretches are compositionally biased toward polar residues: residues 295–312 (SGTY…TGQP), 541–558 (GGSS…SFTP), and 649–659 (GASNGQSQHSL).

This sequence belongs to the ERT1/acuK family.

It is found in the nucleus. Its function is as follows. Transcription factor which regulates nonfermentable carbon utilization. Activator of gluconeogenetic genes. The polypeptide is Transcription activator of gluconeogenesis CPC735_053490 (Coccidioides posadasii (strain C735) (Valley fever fungus)).